The primary structure comprises 162 residues: Interleukin-15 (162 aa).

An N-terminal signal peptide occupies residues 1 to 29; the sequence is MRISKPSLRSTSIQCYLCFLLNSHLITEA. The propeptide occupies 30 to 48; it reads GIHVFVWGCISAGLPKTEA. 2 cysteine pairs are disulfide-bonded: C83–C133 and C90–C136. Residues N119 and N127 are each glycosylated (N-linked (GlcNAc...) asparagine).

Belongs to the IL-15/IL-21 family.

The protein resides in the secreted. Functionally, cytokine that plays a major role in the development of inflammatory and protective immune responses to microbial invaders and parasites by modulating immune cells of both the innate and adaptive immune systems. Stimulates the proliferation of natural killer cells, T-cells and B-cells and promotes the secretion of several cytokines. In monocytes, induces the production of IL8 and monocyte chemotactic protein 1/CCL2, two chemokines that attract neutrophils and monocytes respectively to sites of infection. Unlike most cytokines, which are secreted in soluble form, IL15 is expressed in association with its high affinity IL15RA on the surface of IL15-producing cells and delivers signals to target cells that express IL2RB and IL2RG receptor subunits. Binding to its receptor triggers the phosphorylation of JAK1 and JAK3 and the recruitment and subsequent phosphorylation of signal transducer and activator of transcription-3/STAT3 and STAT5. In mast cells, induces the rapid tyrosine phosphorylation of STAT6 and thereby controls mast cell survival and release of cytokines such as IL4. This Cavia porcellus (Guinea pig) protein is Interleukin-15 (IL15).